The following is a 377-amino-acid chain: Histone deacetylase 8 (377 aa).

The segment at 14 to 324 (LPPVYIYSPE…WTYLTGVILG (311 aa)) is histone deacetylase. At Ser39 the chain carries Phosphoserine. Asp101 is a binding site for substrate. Residue His143 is the Proton acceptor of the active site. Gly151 contributes to the substrate binding site. A divalent metal cation contacts are provided by Asp178, His180, and Asp267. Tyr306 serves as a coordination point for substrate.

Belongs to the histone deacetylase family. HD type 1 subfamily. In terms of assembly, interacts with CBFA2T3. Interacts with phosphorylated SMG5/EST1B; this interaction protects SMG5 from ubiquitin-mediated degradation. Associates with alpha-SMA (smooth muscle alpha-actin). It depends on a divalent metal cation as a cofactor. Phosphorylated by PKA on serine 39. Phosphorylation reduces deacetylase activity observed preferentially on histones H3 and H4.

It localises to the nucleus. The protein resides in the chromosome. It is found in the cytoplasm. The catalysed reaction is N(6)-acetyl-L-lysyl-[histone] + H2O = L-lysyl-[histone] + acetate. The enzyme catalyses N(6)-acetyl-L-lysyl-[protein] + H2O = L-lysyl-[protein] + acetate. It carries out the reaction N(6)-(2E)-butenoyl-L-lysyl-[protein] + H2O = (2E)-2-butenoate + L-lysyl-[protein]. Its activity is regulated as follows. Its activity is inhibited by trichostatin A (TSA) and butyrate, 2 well known histone deacetylase inhibitors. Its function is as follows. Histone deacetylase that catalyzes the deacetylation of lysine residues on the N-terminal part of the core histones (H2A, H2B, H3 and H4). Histone deacetylation gives a tag for epigenetic repression and plays an important role in transcriptional regulation, cell cycle progression and developmental events. Histone deacetylases act via the formation of large multiprotein complexes. Also involved in the deacetylation of cohesin complex protein SMC3 regulating release of cohesin complexes from chromatin. May play a role in smooth muscle cell contractility. In addition to protein deacetylase activity, also has protein-lysine deacylase activity: acts as a protein decrotonylase by mediating decrotonylation ((2E)-butenoyl) of histones. The protein is Histone deacetylase 8 (HDAC8) of Bos taurus (Bovine).